A 325-amino-acid polypeptide reads, in one-letter code: GMP reductase (325 aa).

C174 serves as the catalytic Thioimidate intermediate. L203–V226 is a binding site for NADP(+).

Belongs to the IMPDH/GMPR family. GuaC type 2 subfamily.

It carries out the reaction IMP + NH4(+) + NADP(+) = GMP + NADPH + 2 H(+). Its function is as follows. Catalyzes the irreversible NADPH-dependent deamination of GMP to IMP. It functions in the conversion of nucleobase, nucleoside and nucleotide derivatives of G to A nucleotides, and in maintaining the intracellular balance of A and G nucleotides. This is GMP reductase from Pediococcus pentosaceus (strain ATCC 25745 / CCUG 21536 / LMG 10740 / 183-1w).